The following is an 813-amino-acid chain: Leucine--tRNA ligase (813 aa).

A 'HIGH' region motif is present at residues 41-51; it reads PYPSGTLHMGH. The 'KMSKS' region signature appears at 575 to 579; it reads KMSKS. Lys-578 lines the ATP pocket.

The protein belongs to the class-I aminoacyl-tRNA synthetase family.

Its subcellular location is the cytoplasm. The catalysed reaction is tRNA(Leu) + L-leucine + ATP = L-leucyl-tRNA(Leu) + AMP + diphosphate. This chain is Leucine--tRNA ligase, found in Francisella tularensis subsp. tularensis (strain WY96-3418).